Reading from the N-terminus, the 311-residue chain is Malate dehydrogenase (311 aa).

Residues 7 to 13 (GAAGGIG) and Asp-34 each bind NAD(+). The substrate site is built by Arg-81 and Arg-87. NAD(+) contacts are provided by residues Asn-94 and 117–119 (ITN). Positions 119 and 153 each coordinate substrate. His-177 functions as the Proton acceptor in the catalytic mechanism. Residue Met-227 coordinates NAD(+).

It belongs to the LDH/MDH superfamily. MDH type 1 family. In terms of assembly, homodimer.

The catalysed reaction is (S)-malate + NAD(+) = oxaloacetate + NADH + H(+). Catalyzes the reversible oxidation of malate to oxaloacetate. This is Malate dehydrogenase from Aliivibrio fischeri (strain ATCC 700601 / ES114) (Vibrio fischeri).